A 205-amino-acid chain; its full sequence is Large ribosomal subunit protein uL4 (205 aa).

Residues 45–97 form a disordered region; the sequence is RQGTSAVKNRSAVRGGGKKPWRQKGTGRARQGSIRAPQWRGGGTVFGPTPRSY. Over residues 60–71 the composition is skewed to basic residues; sequence GGKKPWRQKGTG.

Belongs to the universal ribosomal protein uL4 family. In terms of assembly, part of the 50S ribosomal subunit.

One of the primary rRNA binding proteins, this protein initially binds near the 5'-end of the 23S rRNA. It is important during the early stages of 50S assembly. It makes multiple contacts with different domains of the 23S rRNA in the assembled 50S subunit and ribosome. Its function is as follows. Forms part of the polypeptide exit tunnel. In Lactobacillus johnsonii (strain CNCM I-12250 / La1 / NCC 533), this protein is Large ribosomal subunit protein uL4.